We begin with the raw amino-acid sequence, 156 residues long: Small ribosomal subunit protein uS7 (156 aa).

It belongs to the universal ribosomal protein uS7 family. Part of the 30S ribosomal subunit. Contacts proteins S9 and S11.

In terms of biological role, one of the primary rRNA binding proteins, it binds directly to 16S rRNA where it nucleates assembly of the head domain of the 30S subunit. Is located at the subunit interface close to the decoding center, probably blocks exit of the E-site tRNA. The protein is Small ribosomal subunit protein uS7 of Micrococcus luteus (strain ATCC 4698 / DSM 20030 / JCM 1464 / CCM 169 / CCUG 5858 / IAM 1056 / NBRC 3333 / NCIMB 9278 / NCTC 2665 / VKM Ac-2230) (Micrococcus lysodeikticus).